A 230-amino-acid chain; its full sequence is Proteasome subunit alpha (230 aa).

It belongs to the peptidase T1A family. In terms of assembly, the 20S proteasome core is composed of 14 alpha and 14 beta subunits that assemble into four stacked heptameric rings, resulting in a barrel-shaped structure. The two inner rings, each composed of seven catalytic beta subunits, are sandwiched by two outer rings, each composed of seven alpha subunits. The catalytic chamber with the active sites is on the inside of the barrel. Has a gated structure, the ends of the cylinder being occluded by the N-termini of the alpha-subunits. Is capped by the proteasome-associated ATPase, ARC.

Its subcellular location is the cytoplasm. The protein operates within protein degradation; proteasomal Pup-dependent pathway. Its activity is regulated as follows. The formation of the proteasomal ATPase ARC-20S proteasome complex, likely via the docking of the C-termini of ARC into the intersubunit pockets in the alpha-rings, may trigger opening of the gate for substrate entry. Interconversion between the open-gate and close-gate conformations leads to a dynamic regulation of the 20S proteasome proteolysis activity. In terms of biological role, component of the proteasome core, a large protease complex with broad specificity involved in protein degradation. The protein is Proteasome subunit alpha of Thermomonospora curvata (strain ATCC 19995 / DSM 43183 / JCM 3096 / KCTC 9072 / NBRC 15933 / NCIMB 10081 / Henssen B9).